The primary structure comprises 166 residues: Large ribosomal subunit protein uL10 (166 aa).

Belongs to the universal ribosomal protein uL10 family. As to quaternary structure, part of the ribosomal stalk of the 50S ribosomal subunit. The N-terminus interacts with L11 and the large rRNA to form the base of the stalk. The C-terminus forms an elongated spine to which L12 dimers bind in a sequential fashion forming a multimeric L10(L12)X complex.

In terms of biological role, forms part of the ribosomal stalk, playing a central role in the interaction of the ribosome with GTP-bound translation factors. This Ureaplasma parvum serovar 3 (strain ATCC 27815 / 27 / NCTC 11736) protein is Large ribosomal subunit protein uL10.